We begin with the raw amino-acid sequence, 334 residues long: Phospholipase A1 2 (334 aa).

The N-terminal stretch at 1–23 (MMNLKYLLFFCLVQALHYCYAYG) is a signal peptide. The propeptide occupies 24–33 (DPSLSNELDR). Cysteines 37 and 120 form a disulfide. The Nucleophile role is filled by serine 170. Catalysis depends on aspartate 198, which acts as the Charge relay system. Disulfide bonds link cysteine 209–cysteine 214 and cysteine 252–cysteine 261. Histidine 263 serves as the catalytic Charge relay system. Cystine bridges form between cysteine 278–cysteine 302, cysteine 279–cysteine 327, and cysteine 295–cysteine 300.

This sequence belongs to the AB hydrolase superfamily. Lipase family. Post-translationally, not glycosylated. In terms of tissue distribution, expressed by the venom gland.

It localises to the secreted. The enzyme catalyses a 1,2-diacyl-sn-glycero-3-phosphocholine + H2O = a 2-acyl-sn-glycero-3-phosphocholine + a fatty acid + H(+). Catalyzes the hydrolysis of phosphatidylcholine with phospholipase A1 activity (6.3 U/ml). May act as an allergen and induce hemolytic activity. The sequence is that of Phospholipase A1 2 from Vespa affinis (Lesser banded hornet).